The sequence spans 362 residues: Small ribosomal subunit protein uS4m (362 aa).

Residues 105–179 (TRFDVILLRL…FYKEILVEKI (75 aa)) form the S4 RNA-binding domain.

It belongs to the universal ribosomal protein uS4 family. Component of the mitochondrial ribosome small subunit.

The protein localises to the mitochondrion. This is Small ribosomal subunit protein uS4m (RPS4) from Arabidopsis thaliana (Mouse-ear cress).